Reading from the N-terminus, the 426-residue chain is Tol-Pal system protein TolB (426 aa).

An N-terminal signal peptide occupies residues 1 to 25; it reads MNILLSRFRLLLAAALAALSWGAQA.

This sequence belongs to the TolB family. The Tol-Pal system is composed of five core proteins: the inner membrane proteins TolA, TolQ and TolR, the periplasmic protein TolB and the outer membrane protein Pal. They form a network linking the inner and outer membranes and the peptidoglycan layer.

It localises to the periplasm. Its function is as follows. Part of the Tol-Pal system, which plays a role in outer membrane invagination during cell division and is important for maintaining outer membrane integrity. This chain is Tol-Pal system protein TolB, found in Aromatoleum aromaticum (strain DSM 19018 / LMG 30748 / EbN1) (Azoarcus sp. (strain EbN1)).